The following is a 238-amino-acid chain: Dolichyldiphosphatase 1 (238 aa).

Transmembrane regions (helical) follow at residues 33–53 (LAYLSLSPVFVIVGFVTLIIF), 100–120 (PSSHSQFMWFFSVYSFLFLYL), 130–150 (FLDLLWRHVLSLGLLAVAFLV), and 162–182 (WSQVLYGGIAGGLMAIAWFIF).

Belongs to the dolichyldiphosphatase family.

It localises to the endoplasmic reticulum membrane. The enzyme catalyses a di-trans,poly-cis-dolichyl diphosphate + H2O = a di-trans,poly-cis-dolichyl phosphate + phosphate + H(+). It functions in the pathway protein modification; protein glycosylation. In terms of biological role, required for efficient N-glycosylation. Necessary for maintaining optimal levels of dolichol-linked oligosaccharides. Hydrolyzes dolichyl pyrophosphate at a very high rate and dolichyl monophosphate at a much lower rate. Does not act on phosphatidate. The polypeptide is Dolichyldiphosphatase 1 (DOLPP1) (Homo sapiens (Human)).